The chain runs to 160 residues: Sperm protein associated with the nucleus on the X chromosome N2 (160 aa).

2 disordered regions span residues 1–48 (MEKP…TSEY) and 64–160 (SNQL…GEED). Residues 10–35 (GEKRKSPCDSNNRNDEMQETPNRDLA) are compositionally biased toward basic and acidic residues. A compositionally biased stretch (polar residues) spans 64–79 (SNQLENDQSQENSVNP). Positions 81–97 (QEEEDEGSSQEDEDLDS) are enriched in acidic residues. Residues 136-148 (SSERSSQEEKDPD) are compositionally biased toward basic and acidic residues.

The protein belongs to the SPAN-X family.

The sequence is that of Sperm protein associated with the nucleus on the X chromosome N2 (SPANXN2) from Pongo pygmaeus (Bornean orangutan).